Here is a 384-residue protein sequence, read N- to C-terminus: 23S rRNA (uracil(747)-C(5))-methyltransferase RlmC (384 aa).

Residues C7, C15, C18, and C94 each contribute to the [4Fe-4S] cluster site. Positions 219, 248, 269, and 316 each coordinate S-adenosyl-L-methionine. The Nucleophile role is filled by C343.

It belongs to the class I-like SAM-binding methyltransferase superfamily. RNA M5U methyltransferase family. RlmC subfamily.

The enzyme catalyses uridine(747) in 23S rRNA + S-adenosyl-L-methionine = 5-methyluridine(747) in 23S rRNA + S-adenosyl-L-homocysteine + H(+). In terms of biological role, catalyzes the formation of 5-methyl-uridine at position 747 (m5U747) in 23S rRNA. This is 23S rRNA (uracil(747)-C(5))-methyltransferase RlmC from Shewanella sp. (strain ANA-3).